The following is a 195-amino-acid chain: Cytochrome c oxidase assembly protein CtaG (195 aa).

The Cytoplasmic portion of the chain corresponds to 1–7 (MSGGKPR). A helical; Signal-anchor for type II membrane protein membrane pass occupies residues 8–30 (SNTRTVAMLAGVVVLMGALSWAA). The Periplasmic portion of the chain corresponds to 31-195 (VPFYSWFCKV…LDAKTEPTVN (165 aa)).

It belongs to the COX11/CtaG family.

The protein resides in the cell inner membrane. Exerts its effect at some terminal stage of cytochrome c oxidase synthesis, probably by being involved in the insertion of the copper B into subunit I. The polypeptide is Cytochrome c oxidase assembly protein CtaG (Paracoccus denitrificans (strain Pd 1222)).